A 963-amino-acid polypeptide reads, in one-letter code: Thrombospondin-4 (963 aa).

A signal peptide spans 1-26 (MPAPRAAAAAFLLLHLVLQPWQRTSA). Positions 29–194 (TPQVFDLLPS…LEELKLVVRG (166 aa)) constitute a Laminin G-like domain. The Cell attachment site motif lies at 138-140 (RGD). One can recognise an EGF-like 1 domain in the interval 288–327 (PTRHCDSSPCFRGVRCTDTRDGFQCGPCPDGYTGNGITCS). Intrachain disulfides connect Cys292/Cys303, Cys297/Cys312, Cys315/Cys326, Cys332/Cys343, Cys337/Cys352, Cys355/Cys379, Cys385/Cys396, Cys390/Cys405, Cys408/Cys420, Cys426/Cys440, Cys434/Cys450, Cys452/Cys463, Cys479/Cys484, Cys489/Cys509, Cys525/Cys545, Cys548/Cys568, Cys584/Cys604, Cys607/Cys627, Cys645/Cys665, Cys685/Cys705, and Cys721/Cys942. The EGF-like 2; calcium-binding domain maps to 328-365 (DVDECKYHPCYPGVRCVNLAPGFRCDACPVGFTGPMVQ). The EGF-like 3; calcium-binding domain maps to 381–418 (DVDECQNGACVLNSICINTLGSYRCGPCKPGYTGDQTR). Residues 422-464 (TERSCRNPEQNPCSVHAQCIEERQGDVTCVCGVGWAGDGYVCG) form the EGF-like 4 domain. TSP type-3 repeat units lie at residues 465–497 (KDVD…NSGQ), 498–533 (EDAD…NIDQ), 534–556 (RNSD…NNDQ), 557–592 (KDTD…NRDQ), 593–615 (QDRD…NPNQ), 616–653 (SDVD…NSSQ), 654–693 (LDTD…NPAQ), and 694–729 (EDSN…EITL). Positions 564–566 (RGD) match the Cell attachment site motif. The interval 579–676 (NILDNCPRVP…DDDDNDGIPD (98 aa)) is disordered. N-linked (GlcNAc...) asparagine glycosylation is found at Asn614 and Asn650. Polar residues predominate over residues 642–654 (TDNCPTVINSSQL). Acidic residues predominate over residues 662-673 (GDECDDDDDNDG). The 215-residue stretch at 733–947 (RAYQTVVLDP…LKYRCNDTIP (215 aa)) folds into the TSP C-terminal domain. N-linked (GlcNAc...) asparagine glycosylation occurs at Asn943.

Belongs to the thrombospondin family. In terms of assembly, homopentamer; disulfide-linked. Interacts with PTBP3. Interacts (via EGF-like 3; calcium-binding domain) with ATF6 and facilitates its processing, activation and nuclear translocation. Interacts with NOTCH1. In terms of tissue distribution, heart. Up-regulated in the heart in response to ischemic injury and pathology (at protein level). Astrocytes; expressed at high levels in subventricular zone (SVZ)-derived astrocytes and at low levels in cortical astrocytes. In response to peripheral nerve injury, significantly up-regulated in the dorsal spinal cord (at protein level).

It localises to the endoplasmic reticulum. The protein localises to the sarcoplasmic reticulum. The protein resides in the secreted. It is found in the extracellular space. Its subcellular location is the extracellular matrix. In terms of biological role, adhesive glycoprotein that mediates cell-to-cell and cell-to-matrix interactions and is involved in various processes including cellular proliferation, migration, adhesion and attachment, inflammatory response to CNS injury, regulation of vascular inflammation and adaptive responses of the heart to pressure overload and in myocardial function and remodeling. Binds to structural extracellular matrix (ECM) proteins and modulates the ECM in response to tissue damage, contributing to cardioprotective and adaptive ECM remodeling. Plays a role in ER stress response, via its interaction with the activating transcription factor 6 alpha (ATF6) which produces adaptive ER stress response factors and protects myocardium from pressure overload. May contribute to spinal presynaptic hypersensitivity and neuropathic pain states after peripheral nerve injury. May play a role in regulating protective astrogenesis from the subventricular zone (SVZ) niche after injury in a NOTCH1-dependent manner. In Mus musculus (Mouse), this protein is Thrombospondin-4 (Thbs4).